We begin with the raw amino-acid sequence, 158 residues long: uncharacterized protein (158 aa).

A compositionally biased stretch (polar residues) spans 1–21 (MPHTGSQHTLQATPKTAQHTG). Disordered stretches follow at residues 1–89 (MPHT…RVEG) and 107–158 (EEEK…DAKT). 2 stretches are compositionally biased toward basic and acidic residues: residues 51 to 68 (HTEG…DKAG) and 107 to 127 (EEEK…RESR). Over residues 128 to 137 (QGTAHKSTCM) the composition is skewed to polar residues. Residues 149–158 (EIGKVEDAKT) show a composition bias toward basic and acidic residues.

This is an uncharacterized protein from Encephalitozoon cuniculi (strain GB-M1) (Microsporidian parasite).